The sequence spans 780 residues: Ribosome biogenesis protein BOP1 homolog (780 aa).

The segment covering 1 to 11 (MTKKQAIKRKV) has biased composition (basic residues). Positions 1-155 (MTKKQAIKRK…DSDTSDEEDI (155 aa)) are disordered. Positions 17–26 (TNEQSSASEP) are enriched in polar residues. Acidic residues-rich tracts occupy residues 44 to 53 (EDTTDDEGID), 60 to 72 (SSEDLEFESDEEG), 83 to 113 (AEGDAEEDEDDDEEEDEDSDEASEDNDDAEE), and 145 to 154 (EDSDTSDEED). WD repeat units lie at residues 441 to 482 (GHTD…RTIE), 484 to 522 (NDVVRCVAWCPNAKLSIIAVATGSRLLLINPKVGDKLLI), 566 to 608 (THFK…SQIP), 611 to 649 (KSKGLIQCVLFHPVKPCFFVATQHNIRIYDLVKQELIKK), 652 to 691 (TNSKWISGMSIHPKGDNLLVSTYDKKMLWFDLDLSTKPYQ), 695 to 734 (LHRNAVRSVAFHLRYPLFASGSDDQAVIVSHGMVYNDLLQ), and 750 to 780 (RDEFGVLDVSWHPVQPWVFSTGADCTIRLYT).

The protein belongs to the WD repeat BOP1/ERB1 family.

The protein resides in the nucleus. The protein localises to the nucleolus. Its subcellular location is the nucleoplasm. In terms of biological role, required for maturation of ribosomal RNAs and formation of the large ribosomal subunit. The protein is Ribosome biogenesis protein BOP1 homolog of Drosophila virilis (Fruit fly).